A 143-amino-acid polypeptide reads, in one-letter code: Ribonuclease P protein component 2 (143 aa).

This sequence belongs to the eukaryotic/archaeal RNase P protein component 2 family. In terms of assembly, consists of a catalytic RNA component and at least 4-5 protein subunits.

It localises to the cytoplasm. It catalyses the reaction Endonucleolytic cleavage of RNA, removing 5'-extranucleotides from tRNA precursor.. Functionally, part of ribonuclease P, a protein complex that generates mature tRNA molecules by cleaving their 5'-ends. The sequence is that of Ribonuclease P protein component 2 from Saccharolobus islandicus (strain L.S.2.15 / Lassen #1) (Sulfolobus islandicus).